A 595-amino-acid chain; its full sequence is MPVRQLPETIVNRIAAGEVVERPASVVKELVENAIDAGASRIDIFSDGGGRRKIVIADDGSGMTQADLALAVDRHATSKLDDEDLLQIRTLGFRGEALPSIGAVARLSITTRHAAEPHAWALRVEGGDKTPIAPAALTQGTRVEVADLFFATPARLKFLKTDRTEAEAIREVVRRLAMARPDVAFTLAGEERAPVTWAAALPGAPGQLIRLGDILGADFRANAIEVRAEREGVVVEGFAAAPSLTKANALGQYLFVNGRPVRDKLILGAVRAAYSDYLPRDRHPVVALFVTLDAREVDANVHPAKTEVRFRNSGLVRALIVHALKDGLAREGRRTAANSASSVISTFRPASMPPANWDWRSSPSYPVGGSAAPSFAERAQAAFDVGAPSADIRPQEVTPDLLDRPLGAARTQIHETYIVSQTRDGLIVIDQHAAHERIVYERLKASLEANGVQRQILLIPDIVEMDEATVERLVARAEELAQFGLVIESFGPGAVAVRETPSLLGKTDASGLLRDLAEHMAEWDEALPLERRLMHVAATMACHGSVRAGRVLKPEEMNALLREMEATPNSGQCNHGRPTYVELTLADIEKLFGRR.

Belongs to the DNA mismatch repair MutL/HexB family.

Its function is as follows. This protein is involved in the repair of mismatches in DNA. It is required for dam-dependent methyl-directed DNA mismatch repair. May act as a 'molecular matchmaker', a protein that promotes the formation of a stable complex between two or more DNA-binding proteins in an ATP-dependent manner without itself being part of a final effector complex. The sequence is that of DNA mismatch repair protein MutL from Rhodopseudomonas palustris (strain ATCC BAA-98 / CGA009).